A 716-amino-acid chain; its full sequence is Splicing factor Cactin (716 aa).

A disordered region spans residues 1–104 (MGSHGKGKRD…SKKAQKKALR (104 aa)). The segment covering 10 to 22 (DRSGRQKKRRDES) has biased composition (basic and acidic residues). A compositionally biased stretch (low complexity) spans 25 to 45 (GSESESYTSDSDGSDDLSPPR). Over residues 46–61 (SSRRKKGSSSRRTRRR) the composition is skewed to basic residues. Residues 81–95 (SSKDYSEEKVTEYMS) are compositionally biased toward basic and acidic residues. A coiled-coil region spans residues 153–201 (SVKAEKRRHRERMTEVEKVKKRREERAVEKARHEEEMALLARERARAEF). Residue serine 450 is modified to Phosphoserine. The segment at 466 to 525 (VEENEEEINDTNLSDAEEAFSPEPVAEEEEADEAAEAAGSFSPELMHGDDREEAIDPEED) is disordered. The span at 468-500 (ENEEEINDTNLSDAEEAFSPEPVAEEEEADEAA) shows a compositional bias: acidic residues.

Belongs to the CACTIN family. In terms of assembly, interacts with At5g63440.

The protein localises to the nucleus speckle. In terms of biological role, plays a role in pre-mRNA splicing by facilitating excision of a subset of introns. Required for embryogenesis. The chain is Splicing factor Cactin (CTN) from Arabidopsis thaliana (Mouse-ear cress).